The chain runs to 195 residues: Imidazoleglycerol-phosphate dehydratase (195 aa).

It belongs to the imidazoleglycerol-phosphate dehydratase family.

The protein localises to the cytoplasm. It catalyses the reaction D-erythro-1-(imidazol-4-yl)glycerol 3-phosphate = 3-(imidazol-4-yl)-2-oxopropyl phosphate + H2O. It participates in amino-acid biosynthesis; L-histidine biosynthesis; L-histidine from 5-phospho-alpha-D-ribose 1-diphosphate: step 6/9. The sequence is that of Imidazoleglycerol-phosphate dehydratase from Geobacillus kaustophilus (strain HTA426).